The primary structure comprises 573 residues: Sulfite reductase [NADPH] hemoprotein beta-component (573 aa).

[4Fe-4S] cluster contacts are provided by Cys436, Cys442, Cys481, and Cys485. Position 485 (Cys485) interacts with siroheme.

This sequence belongs to the nitrite and sulfite reductase 4Fe-4S domain family. Alpha(8)-beta(8). The alpha component is a flavoprotein, the beta component is a hemoprotein. Siroheme serves as cofactor. It depends on [4Fe-4S] cluster as a cofactor.

It carries out the reaction hydrogen sulfide + 3 NADP(+) + 3 H2O = sulfite + 3 NADPH + 4 H(+). The protein operates within sulfur metabolism; hydrogen sulfide biosynthesis; hydrogen sulfide from sulfite (NADPH route): step 1/1. In terms of biological role, component of the sulfite reductase complex that catalyzes the 6-electron reduction of sulfite to sulfide. This is one of several activities required for the biosynthesis of L-cysteine from sulfate. This is Sulfite reductase [NADPH] hemoprotein beta-component from Alteromonas mediterranea (strain DSM 17117 / CIP 110805 / LMG 28347 / Deep ecotype).